The sequence spans 484 residues: Hexokinase-1 (484 aa).

The 441-residue stretch at lysine 25–alanine 465 folds into the Hexokinase domain. The hexokinase small subdomain stretch occupies residues aspartate 79–leucine 212. Aspartate 90–asparagine 95 is an ATP binding site. Substrate contacts are provided by residues serine 160–tyrosine 161, threonine 177–lysine 178, and serine 213–aspartate 214. The interval serine 213–aspartate 454 is hexokinase large subdomain. Residue threonine 237 participates in ATP binding. 3 residues coordinate substrate: asparagine 240, glutamate 269, and glutamate 302. ATP contacts are provided by residues glycine 307 to cysteine 308, threonine 344 to serine 348, and serine 419 to leucine 423.

Belongs to the hexokinase family. In terms of assembly, monomer.

It carries out the reaction a D-hexose + ATP = a D-hexose 6-phosphate + ADP + H(+). The catalysed reaction is D-mannose + ATP = D-mannose 6-phosphate + ADP + H(+). The enzyme catalyses D-fructose + ATP = D-fructose 6-phosphate + ADP + H(+). It catalyses the reaction D-glucose + ATP = D-glucose 6-phosphate + ADP + H(+). Its pathway is carbohydrate metabolism; hexose metabolism. It functions in the pathway carbohydrate degradation; glycolysis; D-glyceraldehyde 3-phosphate and glycerone phosphate from D-glucose: step 1/4. In terms of biological role, catalyzes the phosphorylation of hexose (six-carbon sugars) to hexose 6-phosphate. Phosphorylates D-fructose, D-mannose and, to a lower extent, D-glucose. Compared to hxk2, has low affinity for D-glucose. The chain is Hexokinase-1 from Schizosaccharomyces pombe (strain 972 / ATCC 24843) (Fission yeast).